An 87-amino-acid chain; its full sequence is MAHKKGVGSSRNGRDSNPKYLGVKIFGGQAIEAGNIIVRQRGTQFHPGTGVGLGRDHTLFALVDGKVEFSVKGAKKRRTVSIVSADA.

It belongs to the bacterial ribosomal protein bL27 family.

The sequence is that of Large ribosomal subunit protein bL27 from Stenotrophomonas maltophilia (strain K279a).